A 214-amino-acid polypeptide reads, in one-letter code: Heat shock 70 kDa protein cognate 1 (214 aa).

Belongs to the heat shock protein 70 family.

This Drosophila simulans (Fruit fly) protein is Heat shock 70 kDa protein cognate 1 (Hsc70-1).